Consider the following 225-residue polypeptide: Uracil-DNA glycosylase (225 aa).

Asp-65 (proton acceptor) is an active-site residue.

It belongs to the uracil-DNA glycosylase (UDG) superfamily. UNG family.

It is found in the cytoplasm. The catalysed reaction is Hydrolyzes single-stranded DNA or mismatched double-stranded DNA and polynucleotides, releasing free uracil.. In terms of biological role, excises uracil residues from the DNA which can arise as a result of misincorporation of dUMP residues by DNA polymerase or due to deamination of cytosine. This Clostridium perfringens (strain ATCC 13124 / DSM 756 / JCM 1290 / NCIMB 6125 / NCTC 8237 / Type A) protein is Uracil-DNA glycosylase.